Consider the following 759-residue polypeptide: MTEQITPEIVAQHGLKPDEYQRILEHLGRVPTLTELGVFSVMWSEHCSYKSSRVHLKTFPTSGPRVLQGPGENAGVVDLGDGLAAAFKMESHNHPSYIEPYQGAATGVGGILRDVFTMGARPIASLNALRFGDPSHPRTAYLLEGVVAGIGGYGNCMGVPTVGGEVAFHPSYNGNCLVNAFTLGILPADKIFRGTAAGVGNPVMYVGAKTGRDGIHGATMASAEFDASTEEKRPTVQVGDPFMEKLLLEACLELFQTDAVVGIQDMGAAGLTSSSVEMAGRGGNGLDLFLDKVPLREEGMTPYEILLSESQERMLLVAAEGKEELVRSICEKWDLDVAVIGRVTASGRWRAHWRGEVVADLPVDPLTEGAPKYHRPMTPHPALPALHAFDPATLPEPSDLGAALLRLLARPTIASKEWVYRQYDHMVRLVGAVRPGGDAAVVRLAVSHEKHAHKGIALSVGVNGRFCFLDPYLGAMHAVAECARNIACVGGEPIAITDCLNFGNPEKPEIMWQFAECVRGIGDACRAFGTPVVSGNVSLYNETEGQGILPTPTVGMVGLVEPVERTCHSTFRAAGDVVALVGSLQGEVGGSEYLSAEHGKEAGRPPALDLAREKAVQETVRRAVRAGLLSSAHDCSEGGLAVALAESCMMHEVPADGSTPAWIGCAVRIPFPVRKDFVLFGEDASRILVSLPKENAARFVELAQECGAPVIRLGAVGGDRLEIQGALSVPVEELARAWRDGIPAVLRRDAAHAGAAAPA.

Residue His-46 is part of the active site. Residues Tyr-49 and Lys-88 each contribute to the ATP site. Residue Glu-90 coordinates Mg(2+). Residues Ser-91 to His-94 and Arg-113 each bind substrate. His-92 functions as the Proton acceptor in the catalytic mechanism. Position 114 (Asp-114) interacts with Mg(2+). Residue Gln-237 coordinates substrate. Residue Asp-265 participates in Mg(2+) binding. Glu-309 to Gln-311 lines the substrate pocket. Positions 498 and 535 each coordinate ATP. Residue Asn-536 coordinates Mg(2+). Substrate is bound at residue Ser-538.

The protein belongs to the FGAMS family. Monomer. Part of the FGAM synthase complex composed of 1 PurL, 1 PurQ and 2 PurS subunits.

It localises to the cytoplasm. The enzyme catalyses N(2)-formyl-N(1)-(5-phospho-beta-D-ribosyl)glycinamide + L-glutamine + ATP + H2O = 2-formamido-N(1)-(5-O-phospho-beta-D-ribosyl)acetamidine + L-glutamate + ADP + phosphate + H(+). Its pathway is purine metabolism; IMP biosynthesis via de novo pathway; 5-amino-1-(5-phospho-D-ribosyl)imidazole from N(2)-formyl-N(1)-(5-phospho-D-ribosyl)glycinamide: step 1/2. In terms of biological role, part of the phosphoribosylformylglycinamidine synthase complex involved in the purines biosynthetic pathway. Catalyzes the ATP-dependent conversion of formylglycinamide ribonucleotide (FGAR) and glutamine to yield formylglycinamidine ribonucleotide (FGAM) and glutamate. The FGAM synthase complex is composed of three subunits. PurQ produces an ammonia molecule by converting glutamine to glutamate. PurL transfers the ammonia molecule to FGAR to form FGAM in an ATP-dependent manner. PurS interacts with PurQ and PurL and is thought to assist in the transfer of the ammonia molecule from PurQ to PurL. This chain is Phosphoribosylformylglycinamidine synthase subunit PurL, found in Anaeromyxobacter dehalogenans (strain 2CP-C).